A 620-amino-acid polypeptide reads, in one-letter code: Protein regulator of cytokinesis 1 (620 aa).

The tract at residues 1–303 is required for the interaction with KIF4A; it reads MRRSEVLAEE…IEAIRVELVQ (303 aa). Residues 1 to 341 are dimerization; it reads MRRSEVLAEE…QLHDAEIVRL (341 aa). 3 coiled-coil regions span residues 96 to 133, 211 to 304, and 383 to 463; these read ILQLEKDLRTQVELMRKQKKERKQELKLLQEQDQELCE, SLEN…LVQY, and GNLL…TEML. The interval 342–466 is spectrin-fold; that stretch reads KNYYEVHKEL…QTETEMLYGS (125 aa). Over residues 446–459 the composition is skewed to basic and acidic residues; it reads AKQERQLKNKKQTE. The disordered stretch occupies residues 446–488; that stretch reads AKQERQLKNKKQTETEMLYGSAPRTPSKRRGLAPNTPGKARKL. Positions 467-620 are unstructured, Arg/Lys rich; that stretch reads APRTPSKRRG…GILNSTNIQS (154 aa). Phosphothreonine; by CDK1 occurs at positions 470 and 481. Phosphoserine occurs at positions 513, 541, and 571. Residues 517–545 form a disordered region; it reads RLPPSGSKPVAASTCSGKKTPRTGRHGAN. Residue threonine 578 is modified to Phosphothreonine. A disordered region spans residues 600 to 620; the sequence is LSKASKSDATSGILNSTNIQS. Positions 606-620 are enriched in polar residues; sequence SDATSGILNSTNIQS. Threonine 616 is subject to Phosphothreonine; by PLK1.

Belongs to the MAP65/ASE1 family. In terms of assembly, homodimer. Interacts with the C-terminal Rho-GAP domain and the basic region of RACGAP1. The interaction with RACGAP1 inhibits its GAP activity towards CDC42 in vitro, which may be required for maintaining normal spindle morphology. Interacts (via N-terminus) with the C-terminus of CENPE (via C-terminus); the interaction occurs during late mitosis. Interacts (via N-terminus) with KIF4A (via C-terminus); the interaction is required for the progression of mitosis. Interacts (via N-terminus) with KIF23 (via C-terminus); the interaction occurs during late mitosis. Interacts with KIF14 and KIF20A. Interacts with PLK1. Interacts with KIF20B. Interacts with CCDC66. Phosphorylation by CDK1 in early mitosis holds PRC1 in an inactive monomeric state, during the metaphase to anaphase transition, PRC1 is dephosphorylated, promoting interaction with KIF4A, which then translocates PRC1 along mitotic spindles to the plus ends of antiparallel interdigitating microtubules. Dephosphorylation also promotes MT-bundling activity by allowing dimerization. Phosphorylation by CDK1 prevents PLK1-binding: upon degradation of CDK1 at anaphase and dephosphorylation, it is then phosphorylated by PLK1, leading to cytokinesis. As to expression, overexpressed in bladder cancer cells.

It localises to the nucleus. The protein resides in the cytoplasm. It is found in the cytoskeleton. Its subcellular location is the spindle pole. The protein localises to the midbody. It localises to the chromosome. Functionally, key regulator of cytokinesis that cross-links antiparrallel microtubules at an average distance of 35 nM. Essential for controlling the spatiotemporal formation of the midzone and successful cytokinesis. Required for KIF14 localization to the central spindle and midbody. Required to recruit PLK1 to the spindle. Stimulates PLK1 phosphorylation of RACGAP1 to allow recruitment of ECT2 to the central spindle. Acts as an oncogene for promoting bladder cancer cells proliferation, apoptosis inhibition and carcinogenic progression. This Homo sapiens (Human) protein is Protein regulator of cytokinesis 1.